The sequence spans 298 residues: Nucleotide-binding protein MLBr00563 (298 aa).

21 to 28 (GLSGAGRG) is a binding site for ATP. 72-75 (DVRS) provides a ligand contact to GTP.

This sequence belongs to the RapZ-like family.

Displays ATPase and GTPase activities. The chain is Nucleotide-binding protein MLBr00563 from Mycobacterium leprae (strain Br4923).